The following is a 608-amino-acid chain: uncharacterized protein (608 aa).

Residues 4–24 (LIFMALLMSLLFIGTVFGYGD) traverse the membrane as a helical segment.

It to M.jannaschii MJ1394 and A.fulgidus AF2028.

The protein resides in the membrane. This is an uncharacterized protein from Methanocaldococcus jannaschii (strain ATCC 43067 / DSM 2661 / JAL-1 / JCM 10045 / NBRC 100440) (Methanococcus jannaschii).